Consider the following 417-residue polypeptide: uncharacterized protein (417 aa).

The tract at residues 1–24 (MSQPPINPLGQPQVPAAASPSGQP) is disordered. A run of 4 helical transmembrane segments spans residues 54 to 74 (VYDT…LLTA), 79 to 99 (LMLY…TLLI), 117 to 137 (AIVV…GAFV), and 143 to 163 (MLVF…LYFM). The segment covering 211–228 (DLSASARMEEHEASQRQD) has biased composition (basic and acidic residues). Disordered stretches follow at residues 211–283 (DLSA…FKDD) and 308–417 (IMPA…RKNK). A compositionally biased stretch (polar residues) spans 312–322 (SSRSPNFSTGT). Residues 336 to 347 (EPSIPRVSSSSR) are compositionally biased toward low complexity. A compositionally biased stretch (polar residues) spans 391-401 (STANLSPSNPF).

Belongs to the chlamydial CPn_0443/CT_005/TC_0273 family.

It localises to the cell membrane. This is an uncharacterized protein from Chlamydia pneumoniae (Chlamydophila pneumoniae).